The following is a 138-amino-acid chain: uncharacterized protein (138 aa).

3 helical membrane-spanning segments follow: residues 17 to 37, 43 to 63, and 117 to 137; these read LIVSTIYIVLFFAILNLTVFF, INLILKNSCVVSFVVVWLLVC, and FWWMNFSLYLLGSLISIVVSL.

It localises to the cell membrane. This is an uncharacterized protein from Mycoplasma pneumoniae (strain ATCC 29342 / M129 / Subtype 1) (Mycoplasmoides pneumoniae).